Reading from the N-terminus, the 177-residue chain is MVEKAQLMDEKAIARAITRISHEIIERNKGVENLVLVGIKTRGVPIANRISKKIEQIEGTKVDTGDIDITLYRDDLEKIHVEPVVKGTYLDFNVNDKTVVLVDDVLYTGRTVRASLDAIIDIGRPKSIQLAVLVDRGHRELPIRADYVGKNVPTSRHEIISVSLLEIDGEDSVTIKE.

The short motif at Val-99–Thr-111 is the PRPP-binding element.

The protein belongs to the purine/pyrimidine phosphoribosyltransferase family. PyrR subfamily. Homodimer and homohexamer; in equilibrium.

The catalysed reaction is UMP + diphosphate = 5-phospho-alpha-D-ribose 1-diphosphate + uracil. Its function is as follows. Regulates transcriptional attenuation of the pyrimidine nucleotide (pyr) operon by binding in a uridine-dependent manner to specific sites on pyr mRNA. This disrupts an antiterminator hairpin in the RNA and favors formation of a downstream transcription terminator, leading to a reduced expression of downstream genes. Functionally, also displays a weak uracil phosphoribosyltransferase activity which is not physiologically significant. This is Bifunctional protein PyrR from Clostridioides difficile (strain 630) (Peptoclostridium difficile).